We begin with the raw amino-acid sequence, 303 residues long: uncharacterized protein (303 aa).

An HTH araC/xylS-type domain is found at 183 to 281 (KDILFYLNNN…GCSPSDYRRQ (99 aa)). 2 DNA-binding regions (H-T-H motif) span residues 200–221 (EQLS…TKEY) and 248–271 (QAEI…LRHV).

This is an uncharacterized protein from Escherichia coli (strain K12).